Reading from the N-terminus, the 151-residue chain is Ribosome maturation factor RimP (151 aa).

This sequence belongs to the RimP family.

The protein localises to the cytoplasm. In terms of biological role, required for maturation of 30S ribosomal subunits. This chain is Ribosome maturation factor RimP, found in Pasteurella multocida (strain Pm70).